Consider the following 408-residue polypeptide: Succinylornithine transaminase (408 aa).

At lysine 252 the chain carries N6-(pyridoxal phosphate)lysine.

The protein belongs to the class-III pyridoxal-phosphate-dependent aminotransferase family. AstC subfamily. Pyridoxal 5'-phosphate serves as cofactor.

It catalyses the reaction N(2)-succinyl-L-ornithine + 2-oxoglutarate = N-succinyl-L-glutamate 5-semialdehyde + L-glutamate. The protein operates within amino-acid degradation; L-arginine degradation via AST pathway; L-glutamate and succinate from L-arginine: step 3/5. Functionally, catalyzes the transamination of N(2)-succinylornithine and alpha-ketoglutarate into N(2)-succinylglutamate semialdehyde and glutamate. Can also act as an acetylornithine aminotransferase. The polypeptide is Succinylornithine transaminase (Salmonella agona (strain SL483)).